The following is a 332-amino-acid chain: 5-dehydro-2-deoxygluconokinase (332 aa).

It belongs to the carbohydrate kinase PfkB family.

The enzyme catalyses 5-dehydro-2-deoxy-D-gluconate + ATP = 6-phospho-5-dehydro-2-deoxy-D-gluconate + ADP + H(+). It functions in the pathway polyol metabolism; myo-inositol degradation into acetyl-CoA; acetyl-CoA from myo-inositol: step 5/7. Its function is as follows. Catalyzes the phosphorylation of 5-dehydro-2-deoxy-D-gluconate (2-deoxy-5-keto-D-gluconate or DKG) to 6-phospho-5-dehydro-2-deoxy-D-gluconate (DKGP). The sequence is that of 5-dehydro-2-deoxygluconokinase from Bacillus anthracis (strain A0248).